Reading from the N-terminus, the 436-residue chain is Phosphomethylpyrimidine synthase (436 aa).

Substrate contacts are provided by residues Asn68, Met97, Tyr126, His166, 188-190 (SRG), 229-232 (DGFR), and Glu268. Position 272 (His272) interacts with Zn(2+). Position 295 (Tyr295) interacts with substrate. His336 contributes to the Zn(2+) binding site. Residues Cys412, Cys415, and Cys419 each coordinate [4Fe-4S] cluster.

The protein belongs to the ThiC family. As to quaternary structure, homodimer. Requires [4Fe-4S] cluster as cofactor.

It carries out the reaction 5-amino-1-(5-phospho-beta-D-ribosyl)imidazole + S-adenosyl-L-methionine = 4-amino-2-methyl-5-(phosphooxymethyl)pyrimidine + CO + 5'-deoxyadenosine + formate + L-methionine + 3 H(+). The protein operates within cofactor biosynthesis; thiamine diphosphate biosynthesis. In terms of biological role, catalyzes the synthesis of the hydroxymethylpyrimidine phosphate (HMP-P) moiety of thiamine from aminoimidazole ribotide (AIR) in a radical S-adenosyl-L-methionine (SAM)-dependent reaction. In Geobacter metallireducens (strain ATCC 53774 / DSM 7210 / GS-15), this protein is Phosphomethylpyrimidine synthase.